We begin with the raw amino-acid sequence, 40 residues long: Dolichyl-diphosphooligosaccharide--protein glycosyltransferase subunit 4 (40 aa).

The Lumenal segment spans residues 1–7 (MITDMQL). Residues 8 to 28 (AIFSNVLGVFLFLLVVAYHYI) traverse the membrane as a helical segment. The Cytoplasmic portion of the chain corresponds to 29–40 (NANTGKPSAKAK).

The protein belongs to the OST4 family. In terms of assembly, component of the oligosaccharyltransferase (OST) complex.

The protein localises to the endoplasmic reticulum membrane. In terms of biological role, subunit of the oligosaccharyl transferase (OST) complex that catalyzes the initial transfer of a defined glycan (Glc(3)Man(9)GlcNAc(2) in eukaryotes) from the lipid carrier dolichol-pyrophosphate to an asparagine residue within an Asn-X-Ser/Thr consensus motif in nascent polypeptide chains, the first step in protein N-glycosylation. N-glycosylation occurs cotranslationally and the complex associates with the Sec61 complex at the channel-forming translocon complex that mediates protein translocation across the endoplasmic reticulum (ER). All subunits are required for a maximal enzyme activity. The chain is Dolichyl-diphosphooligosaccharide--protein glycosyltransferase subunit 4 from Drosophila sechellia (Fruit fly).